A 427-amino-acid chain; its full sequence is UPF0597 protein CPF_0803 (427 aa).

This sequence belongs to the UPF0597 family.

This Clostridium perfringens (strain ATCC 13124 / DSM 756 / JCM 1290 / NCIMB 6125 / NCTC 8237 / Type A) protein is UPF0597 protein CPF_0803.